A 458-amino-acid polypeptide reads, in one-letter code: Bifunctional protein GlmU (458 aa).

The interval 1-232 is pyrophosphorylase; it reads MTSSLSVIIL…TFEIEGVNNR (232 aa). UDP-N-acetyl-alpha-D-glucosamine is bound by residues 10 to 13, lysine 24, glutamine 79, 84 to 85, 106 to 108, glycine 142, glutamate 157, asparagine 172, and asparagine 230; these read LAAG, GT, and YGD. Residue aspartate 108 coordinates Mg(2+). Residue asparagine 230 coordinates Mg(2+). Residues 233-253 are linker; sequence QQLASLERTWQGKLVADLQEA. The segment at 254-458 is N-acetyltransferase; sequence GVQFADPTRV…KNDFKRPTKK (205 aa). Residues arginine 336 and lysine 354 each coordinate UDP-N-acetyl-alpha-D-glucosamine. Histidine 366 serves as the catalytic Proton acceptor. Residues tyrosine 369 and asparagine 380 each contribute to the UDP-N-acetyl-alpha-D-glucosamine site. Acetyl-CoA-binding positions include alanine 383, 389 to 390, serine 408, alanine 426, and arginine 443; that span reads NY.

This sequence in the N-terminal section; belongs to the N-acetylglucosamine-1-phosphate uridyltransferase family. It in the C-terminal section; belongs to the transferase hexapeptide repeat family. As to quaternary structure, homotrimer. Requires Mg(2+) as cofactor.

The protein resides in the cytoplasm. The catalysed reaction is alpha-D-glucosamine 1-phosphate + acetyl-CoA = N-acetyl-alpha-D-glucosamine 1-phosphate + CoA + H(+). It carries out the reaction N-acetyl-alpha-D-glucosamine 1-phosphate + UTP + H(+) = UDP-N-acetyl-alpha-D-glucosamine + diphosphate. Its pathway is nucleotide-sugar biosynthesis; UDP-N-acetyl-alpha-D-glucosamine biosynthesis; N-acetyl-alpha-D-glucosamine 1-phosphate from alpha-D-glucosamine 6-phosphate (route II): step 2/2. The protein operates within nucleotide-sugar biosynthesis; UDP-N-acetyl-alpha-D-glucosamine biosynthesis; UDP-N-acetyl-alpha-D-glucosamine from N-acetyl-alpha-D-glucosamine 1-phosphate: step 1/1. It functions in the pathway bacterial outer membrane biogenesis; LPS lipid A biosynthesis. Functionally, catalyzes the last two sequential reactions in the de novo biosynthetic pathway for UDP-N-acetylglucosamine (UDP-GlcNAc). The C-terminal domain catalyzes the transfer of acetyl group from acetyl coenzyme A to glucosamine-1-phosphate (GlcN-1-P) to produce N-acetylglucosamine-1-phosphate (GlcNAc-1-P), which is converted into UDP-GlcNAc by the transfer of uridine 5-monophosphate (from uridine 5-triphosphate), a reaction catalyzed by the N-terminal domain. The polypeptide is Bifunctional protein GlmU (Psychrobacter cryohalolentis (strain ATCC BAA-1226 / DSM 17306 / VKM B-2378 / K5)).